The primary structure comprises 83 residues: Small ribosomal subunit protein bS21 (83 aa).

The interval 40–83 (TPMDERRRKARSASKRNKVKWRYSNKSEETASETAETPASAPEA) is disordered. Residues 47–62 (RKARSASKRNKVKWRY) show a composition bias toward basic residues. Low complexity predominate over residues 71–83 (SETAETPASAPEA).

This sequence belongs to the bacterial ribosomal protein bS21 family.

In Akkermansia muciniphila (strain ATCC BAA-835 / DSM 22959 / JCM 33894 / BCRC 81048 / CCUG 64013 / CIP 107961 / Muc), this protein is Small ribosomal subunit protein bS21.